The primary structure comprises 690 residues: Eukaryotic translation initiation factor 3 subunit B (690 aa).

The segment covering 1-11 (MAKKKSEEHSG) has biased composition (basic and acidic residues). Residues 1-33 (MAKKKSEEHSGTDANDSDYQEEPNFDDPPGFVD) are disordered. Residues 15-25 (NDSDYQEEPNF) show a composition bias toward acidic residues. Residues 57-141 (SVVVVDNIPK…HTFAVNLFTD (85 aa)) enclose the RRM domain. WD repeat units follow at residues 207 to 246 (TRER…KIQK), 293 to 331 (DGMS…LLDL), 334 to 369 (IKIP…TLME), 442 to 484 (EIRE…KPSL), and 530 to 575 (PDHF…IKRT). Positions 595-645 (EEKQKEIKKNLKKYYAAFEQKDRLRLTRASKELLEKRSQLRETFMEYRNKR) form a coiled coil.

The protein belongs to the eIF-3 subunit B family. In terms of assembly, component of the eukaryotic translation initiation factor 3 (eIF-3) complex. The eIF-3 complex interacts with pix. Interacts with mxt.

Its subcellular location is the cytoplasm. Functionally, RNA-binding component of the eukaryotic translation initiation factor 3 (eIF-3) complex, which is involved in protein synthesis of a specialized repertoire of mRNAs and, together with other initiation factors, stimulates binding of mRNA and methionyl-tRNAi to the 40S ribosome. The eIF-3 complex specifically targets and initiates translation of a subset of mRNAs involved in cell proliferation. The protein is Eukaryotic translation initiation factor 3 subunit B of Drosophila melanogaster (Fruit fly).